Here is a 163-residue protein sequence, read N- to C-terminus: ADP-ribosylation factor-like protein 2-binding protein (163 aa).

This sequence belongs to the ARL2BP family. In terms of assembly, interacts with GTP bound ARL2 and ARL3; the complex ARL2-ARL2BP as well as ARL2BP alone, binds to SLC25A4/ANT1. Interaction with ARL2 may be required for targeting to cilia basal body. Interacts with STAT3; interaction is enhanced with ARL2. Found in a complex with ARL2BP, ARL2 and SLC25A6. Found in a complex with ARL2, ARL2BP and SLC25A4. Interacts with STAT2, STAT3 and STAT4. Widely expressed, with most abundant activity in brain, especially in hippocampus and cortex. Also expressed in lung, cerebellum, liver, kidney, retina, spleen, muscle and heart (at protein level).

It localises to the cytoplasm. Its subcellular location is the mitochondrion intermembrane space. The protein resides in the cytoskeleton. It is found in the microtubule organizing center. The protein localises to the centrosome. It localises to the nucleus. Its subcellular location is the cilium basal body. Its function is as follows. Together with ARL2, plays a role in the nuclear translocation, retention and transcriptional activity of STAT3. May play a role as an effector of ARL2. This Mus musculus (Mouse) protein is ADP-ribosylation factor-like protein 2-binding protein (Arl2bp).